The following is a 173-amino-acid chain: NADH-ubiquinone oxidoreductase chain 6 (173 aa).

Helical transmembrane passes span 1–21 (MTYF…AVAS), 27–47 (YGVV…LSLG), 48–68 (VSFV…VVFV), 91–111 (GVGF…IGCL), and 141–161 (VGMF…VLEL).

Belongs to the complex I subunit 6 family.

It localises to the mitochondrion membrane. It carries out the reaction a ubiquinone + NADH + 5 H(+)(in) = a ubiquinol + NAD(+) + 4 H(+)(out). Its function is as follows. Core subunit of the mitochondrial membrane respiratory chain NADH dehydrogenase (Complex I) that is believed to belong to the minimal assembly required for catalysis. Complex I functions in the transfer of electrons from NADH to the respiratory chain. The immediate electron acceptor for the enzyme is believed to be ubiquinone. The sequence is that of NADH-ubiquinone oxidoreductase chain 6 (MT-ND6) from Fratercula arctica (Atlantic puffin).